The primary structure comprises 179 residues: Large ribosomal subunit protein uL5 (179 aa).

Belongs to the universal ribosomal protein uL5 family. Part of the 50S ribosomal subunit; part of the 5S rRNA/L5/L18/L25 subcomplex. Contacts the 5S rRNA and the P site tRNA. Forms a bridge to the 30S subunit in the 70S ribosome.

Its function is as follows. This is one of the proteins that bind and probably mediate the attachment of the 5S RNA into the large ribosomal subunit, where it forms part of the central protuberance. In the 70S ribosome it contacts protein S13 of the 30S subunit (bridge B1b), connecting the 2 subunits; this bridge is implicated in subunit movement. Contacts the P site tRNA; the 5S rRNA and some of its associated proteins might help stabilize positioning of ribosome-bound tRNAs. The chain is Large ribosomal subunit protein uL5 from Bordetella petrii (strain ATCC BAA-461 / DSM 12804 / CCUG 43448).